The chain runs to 185 residues: Ribosome-recycling factor (185 aa).

Belongs to the RRF family.

Its subcellular location is the cytoplasm. In terms of biological role, responsible for the release of ribosomes from messenger RNA at the termination of protein biosynthesis. May increase the efficiency of translation by recycling ribosomes from one round of translation to another. The polypeptide is Ribosome-recycling factor (Corynebacterium glutamicum (strain R)).